The following is an 86-amino-acid chain: Ferredoxin-like protein YgcO (86 aa).

The 4Fe-4S ferredoxin-type domain occupies 45 to 74 (GNLRIDYRSCLECGTCRLLCDESTLQQWRY).

This sequence belongs to the bacterial-type ferredoxin family. FixX subfamily.

Functionally, could be a 3Fe-4S cluster-containing protein. Probably participates in a redox process with YgcN, YgcQ and YgcR. This chain is Ferredoxin-like protein YgcO (ygcO), found in Escherichia coli (strain K12).